The chain runs to 149 residues: Calmodulin-1 (149 aa).

EF-hand domains lie at 8-43, 44-79, 81-116, and 117-149; these read EQISEFKEAFSLFDKDGDGCITTKELGTVMRSLGQN, PTEAELQDMINEVDADGNGTIDFPEFLNLMAKKMKD, DSEEELKEAFRVFDKDQNGFISAAELRHVMTNLGEK, and LTDEEVEEMIREADVDGDGQINYEEFVKIMMAK. Ca(2+) contacts are provided by aspartate 21, aspartate 23, aspartate 25, cysteine 27, glutamate 32, aspartate 57, aspartate 59, asparagine 61, threonine 63, glutamate 68, aspartate 94, aspartate 96, asparagine 98, glutamate 105, aspartate 130, aspartate 132, aspartate 134, glutamine 136, and glutamate 141.

This sequence belongs to the calmodulin family. In terms of assembly, interacts with ZAR1 (via CaMBD domain). Binds to IQD1. Binds to MEE62 in a calcium-dependent manner.

The protein resides in the cytoplasm. It is found in the cell membrane. In terms of biological role, calmodulin mediates the control of a large number of enzymes, ion channels and other proteins by Ca(2+). Among the enzymes to be stimulated by the calmodulin-Ca(2+) complex are a number of protein kinases and phosphatases. This Arabidopsis thaliana (Mouse-ear cress) protein is Calmodulin-1 (CAM1).